Reading from the N-terminus, the 231-residue chain is Nuclear transcription factor Y subunit C-9 (231 aa).

Residues 211–231 (NPYMGQPMWQQQAPDQPDQEN) form a disordered region.

This sequence belongs to the NFYC/HAP5 subunit family. In terms of assembly, heterotrimeric transcription factor composed of three components, NF-YA, NF-YB and NF-YC. Interacts with NFYA2, NFYB2, CO and RGA. Interacts with REF6 (via N-terminus). As to expression, ubiquitous. Present in etiolated seedlings.

The protein resides in the nucleus. Functionally, stimulates the transcription of various genes by recognizing and binding to a CCAAT motif in promoters. Interacts with REF6 to directly regulate SOC1 transcription in response to flowering signals from photoperiod and gibberellic acid pathways. The polypeptide is Nuclear transcription factor Y subunit C-9 (NFYC9) (Arabidopsis thaliana (Mouse-ear cress)).